A 166-amino-acid chain; its full sequence is Putative 4-hydroxy-4-methyl-2-oxoglutarate aldolase 1 (166 aa).

Residue Ala-2 is modified to N-acetylalanine. Substrate contacts are provided by residues 81–84 and Arg-103; that span reads GGNP. Asp-104 is a binding site for a divalent metal cation.

Belongs to the class II aldolase/RraA-like family. Homotrimer. A divalent metal cation serves as cofactor.

The catalysed reaction is 4-hydroxy-4-methyl-2-oxoglutarate = 2 pyruvate. It carries out the reaction oxaloacetate + H(+) = pyruvate + CO2. Functionally, catalyzes the aldol cleavage of 4-hydroxy-4-methyl-2-oxoglutarate (HMG) into 2 molecules of pyruvate. Also contains a secondary oxaloacetate (OAA) decarboxylase activity due to the common pyruvate enolate transition state formed following C-C bond cleavage in the retro-aldol and decarboxylation reactions. The sequence is that of Putative 4-hydroxy-4-methyl-2-oxoglutarate aldolase 1 from Arabidopsis thaliana (Mouse-ear cress).